A 71-amino-acid chain; its full sequence is Large ribosomal subunit protein uL29 (71 aa).

The protein belongs to the universal ribosomal protein uL29 family.

In Aeropyrum pernix (strain ATCC 700893 / DSM 11879 / JCM 9820 / NBRC 100138 / K1), this protein is Large ribosomal subunit protein uL29 (rpl29).